The sequence spans 160 residues: Transcription antitermination protein NusB (160 aa).

It belongs to the NusB family.

Its function is as follows. Involved in transcription antitermination. Required for transcription of ribosomal RNA (rRNA) genes. Binds specifically to the boxA antiterminator sequence of the ribosomal RNA (rrn) operons. This is Transcription antitermination protein NusB from Rhizobium etli (strain CIAT 652).